A 341-amino-acid chain; its full sequence is Protein BIG GRAIN 1-like C (341 aa).

Disordered regions lie at residues 28-61 (DGLQ…LTTL) and 76-138 (SSTT…SDDD). Over residues 52–61 (NKKDDKLTTL) the composition is skewed to basic and acidic residues. Over residues 76 to 92 (SSTTTTNSSDSSSFSSS) the composition is skewed to low complexity. Basic and acidic residues predominate over residues 105–138 (KLAEQGKRSGDERQRTKRTVMDNDSRLFSKSDDD).

It belongs to the BIG GRAIN 1 (BG1) plant protein family.

The protein localises to the cell membrane. Its function is as follows. Involved in auxin transport. Regulator of the auxin signaling pathway. The chain is Protein BIG GRAIN 1-like C from Arabidopsis thaliana (Mouse-ear cress).